The chain runs to 395 residues: Phosphoglycerate kinase (395 aa).

Residues 22-24 (DFN), Arg38, 61-64 (HLGR), Arg119, and Arg152 each bind substrate. ATP-binding positions include Lys203, Gly294, Glu325, and 351 to 354 (GGDT).

The protein belongs to the phosphoglycerate kinase family. As to quaternary structure, monomer.

Its subcellular location is the cytoplasm. It catalyses the reaction (2R)-3-phosphoglycerate + ATP = (2R)-3-phospho-glyceroyl phosphate + ADP. It participates in carbohydrate degradation; glycolysis; pyruvate from D-glyceraldehyde 3-phosphate: step 2/5. The chain is Phosphoglycerate kinase from Hydrogenobaculum sp. (strain Y04AAS1).